The chain runs to 314 residues: Ribonuclease Z (314 aa).

Positions 62, 64, 66, 67, 144, 215, and 273 each coordinate Zn(2+). Asp-66 acts as the Proton acceptor in catalysis.

It belongs to the RNase Z family. Homodimer. Zn(2+) is required as a cofactor.

It catalyses the reaction Endonucleolytic cleavage of RNA, removing extra 3' nucleotides from tRNA precursor, generating 3' termini of tRNAs. A 3'-hydroxy group is left at the tRNA terminus and a 5'-phosphoryl group is left at the trailer molecule.. Its function is as follows. Zinc phosphodiesterase, which displays some tRNA 3'-processing endonuclease activity. Probably involved in tRNA maturation, by removing a 3'-trailer from precursor tRNA. This Prochlorococcus marinus (strain NATL1A) protein is Ribonuclease Z.